Consider the following 404-residue polypeptide: Deoxyguanosinetriphosphate triphosphohydrolase-like protein 1 (404 aa).

An HD domain is found at 75–219 (RLTHSIEVAQ…AAIADDIAYN (145 aa)).

It belongs to the dGTPase family. Type 2 subfamily.

The chain is Deoxyguanosinetriphosphate triphosphohydrolase-like protein 1 from Mesorhizobium japonicum (strain LMG 29417 / CECT 9101 / MAFF 303099) (Mesorhizobium loti (strain MAFF 303099)).